The chain runs to 77 residues: Putative defensin-like protein 30 (77 aa).

Residues 1 to 26 (MASSSKCAFLVFLCMIVLLAPSEVHA) form the signal peptide. 3 disulfide bridges follow: Cys-43–Cys-63, Cys-49–Cys-72, and Cys-53–Cys-74.

This sequence belongs to the DEFL family.

The protein localises to the secreted. The protein is Putative defensin-like protein 30 of Arabidopsis thaliana (Mouse-ear cress).